A 352-amino-acid chain; its full sequence is C-X-C chemokine receptor type 4 (352 aa).

Positions 1-21 (MEGISIYTSDNYTEEMGSGDY) are important for chemokine binding and signaling. Residues 1-38 (MEGISIYTSDNYTEEMGSGDYDSMKEPCFREENANFNK) are Extracellular-facing. Y7 is modified (sulfotyrosine). N-linked (GlcNAc...) asparagine glycosylation occurs at N11. Residue Y12 is modified to Sulfotyrosine. A glycan (O-linked (Xyl...) (chondroitin sulfate) serine) is linked at S18. Y21 carries the post-translational modification Sulfotyrosine. 2 disulfides stabilise this stretch: C28/C274 and C109/C186. A helical transmembrane segment spans residues 39–63 (IFLPTIYSIIFLTGIVGNGLVILVM). Residues 64-77 (GYQKKLRSMTDKYR) are Cytoplasmic-facing. A helical membrane pass occupies residues 78-99 (LHLSVADLLFVITLPFWAVDAV). Positions 94-97 (WAVD) are chemokine binding. Topologically, residues 100–110 (ANWYFGNFLCK) are extracellular. A helical transmembrane segment spans residues 111 to 130 (AVHVIYTVNLYSSVLILAFI). The segment at 113–117 (HVIYT) is chemokine binding. Residues 131–154 (SLDRYLAIVHATNSQRPRKLLAEK) are Cytoplasmic-facing. Residues 133–135 (DRY) carry the Important for signaling motif. Residues 135–147 (YLAIVHATNSQRP) form an involved in dimerization; when bound to chemokine region. Residues 155–174 (VVYVGVWIPALLLTIPDFIF) traverse the membrane as a helical segment. At 175–195 (ANVSEADDRYICDRFYPNDLW) the chain is on the extracellular side. The chemokine binding, important for signaling stretch occupies residues 186–190 (CDRFY). Residues 191–210 (PNDLWVVVFQFQHIMVGLIL) are involved in dimerization. The helical transmembrane segment at 196 to 216 (VVVFQFQHIMVGLILPGIVIL) threads the bilayer. The Cytoplasmic portion of the chain corresponds to 217 to 241 (SCYCIIISKLSHSKGHQKRKALKTT). A helical transmembrane segment spans residues 242 to 261 (VILILAFFACWLPYYIGISI). The Extracellular segment spans residues 262–282 (DSFILLEIIKQGCEFENTVHK). Residues 266-268 (LLE) form an involved in dimerization region. Residues 283–302 (WISITEALAFFHCCLNPILY) traverse the membrane as a helical segment. Residues 303–352 (AFLGAKFKTSAQHALTSVSRGSSLKILSKGKRGGHSSVSTESESSSFHSS) are Cytoplasmic-facing. 2 positions are modified to phosphoserine: S319 and S321. A phosphoserine; by PKC and GRK6 mark is found at S324 and S325. The disordered stretch occupies residues 329–352 (LSKGKRGGHSSVSTESESSSFHSS). Position 330 is a phosphoserine; by GRK6 (S330). A Glycyl lysine isopeptide (Lys-Gly) (interchain with G-Cter in ubiquitin) cross-link involves residue K331. The segment covering 337–352 (HSSVSTESESSSFHSS) has biased composition (low complexity). S339 carries the phosphoserine; by GRK6 modification. 2 positions are modified to phosphoserine: S348 and S351.

Belongs to the G-protein coupled receptor 1 family. Monomer. Can form homodimers. Interacts with CD164. Interacts with ARRB2; the interaction is dependent on the C-terminal phosphorylation of CXCR4 and allows activation of MAPK1 and MAPK3. Interacts with ARR3; the interaction is dependent on the C-terminal phosphorylation of CXCR4 and modulates calcium mobilization. Interacts with RNF113A; the interaction, enhanced by CXCL12, promotes CXCR4 ubiquitination and subsequent degradation. Interacts (via the cytoplasmic C-terminal) with ITCH (via the WW domains I and II); the interaction, enhanced by CXCL12, promotes CXCR4 ubiquitination and leads to its degradation. Interacts with extracellular ubiquitin. Interacts with DBN1; this interaction is enhanced by antigenic stimulation. Following LPS binding, may form a complex with GDF5, HSP90AA1 and HSPA8. Post-translationally, phosphorylated on agonist stimulation. Rapidly phosphorylated on serine and threonine residues in the C-terminal. Phosphorylation at Ser-324 and Ser-325 leads to recruitment of ITCH, ubiquitination and protein degradation. Ubiquitinated after ligand binding, leading to its degradation. Ubiquitinated by ITCH at the cell membrane on agonist stimulation. The ubiquitin-dependent mechanism, endosomal sorting complex required for transport (ESCRT), then targets CXCR4 for lysosomal degradation. This process is dependent also on prior Ser-/Thr-phosphorylation in the C-terminal of CXCR4. Also binding of ARRB1 to STAM negatively regulates CXCR4 sorting to lysosomes though modulating ubiquitination of SFR5S. In terms of processing, sulfation is required for efficient binding of CXCL12/SDF-1alpha and promotes its dimerization. Post-translationally, O- and N-glycosylated. N-glycosylation can mask coreceptor function. The O-glycosylation chondroitin sulfate attachment does not affect interaction with CXCL12/SDF-1alpha nor its coreceptor activity.

The protein resides in the cell membrane. It localises to the cell junction. Its subcellular location is the early endosome. It is found in the late endosome. The protein localises to the lysosome. Receptor for the C-X-C chemokine CXCL12/SDF-1 that transduces a signal by increasing intracellular calcium ion levels and enhancing MAPK1/MAPK3 activation. Involved in the AKT signaling cascade. Plays a role in regulation of cell migration, e.g. during wound healing. Acts as a receptor for extracellular ubiquitin; leading to enhanced intracellular calcium ions and reduced cellular cAMP levels. Binds bacterial lipopolysaccharide (LPS) et mediates LPS-induced inflammatory response, including TNF secretion by monocytes. Involved in hematopoiesis and in cardiac ventricular septum formation. Also plays an essential role in vascularization of the gastrointestinal tract, probably by regulating vascular branching and/or remodeling processes in endothelial cells. Involved in cerebellar development. In the CNS, could mediate hippocampal-neuron survival. The sequence is that of C-X-C chemokine receptor type 4 (CXCR4) from Pan troglodytes (Chimpanzee).